A 2388-amino-acid chain; its full sequence is Hybrid signal transduction histidine kinase M (2388 aa).

Disordered regions lie at residues 1-32 (MSNY…NNFN), 42-61 (FNTP…NSIS), 69-111 (NECN…STPI), 123-209 (NRSN…NAYP), 237-337 (TLLN…SPKL), 361-421 (SPHG…YNDN), 430-449 (TRNT…SSSF), and 486-542 (IYTP…NNNE). Residues 69–82 (NECNSGGEQSPKIK) are compositionally biased toward polar residues. Composition is skewed to low complexity over residues 83–110 (TNNN…KSTP), 125–206 (SNLN…SNSN), and 242–288 (SSNN…NNGG). Residues 293-306 (QFISSDNKYNTVGN) show a composition bias toward polar residues. Residues 309–322 (HHHHHHQLHNHRHS) are compositionally biased toward basic residues. Low complexity-rich tracts occupy residues 325–337 (QGSS…SPKL), 361–399 (SPHG…NQNN), 410–419 (NNSNDSFDYN), and 432–449 (NTGY…SSSF). A compositionally biased stretch (pro residues) spans 489–505 (PPYPQPYPQPPQLPPPS). The span at 506 to 541 (SSSSLSKENDNVDNNNTNNNNNNNNNNNNNNNNNNN) shows a compositional bias: low complexity. Helical transmembrane passes span 550–570 (TMNL…FLMV), 589–609 (FILI…LLVV), 645–665 (YIFL…NLFF), and 679–699 (NIST…SHIP). The interval 732–888 (NNDNKNKIND…NNNEEDDEEE (157 aa)) is disordered. The span at 735–744 (NKNKINDKSD) shows a compositional bias: basic and acidic residues. Low complexity predominate over residues 745–880 (NSNSITNNNN…NNNNNNNNNN (136 aa)). Helical transmembrane passes span 896 to 916 (FQIF…LIVL), 953 to 973 (VQFQ…LLLV), and 1025 to 1045 (CSVG…WMSI). One can recognise a Histidine kinase domain in the interval 1093 to 1499 (RLVQNTGSII…VFELQVPMKC (407 aa)). A compositionally biased stretch (basic residues) spans 1236 to 1257 (PIHHHRHHHRHHHHHHHHHHHH). A disordered region spans residues 1236-1410 (PIHHHRHHHR…INNNINNNNN (175 aa)). Over residues 1260–1274 (DDDDYDDDNDDDNNT) the composition is skewed to acidic residues. Residues 1286-1315 (LSDKIKDNQDENLELKKSNNDKIIENKENQ) are compositionally biased toward basic and acidic residues. A compositionally biased stretch (low complexity) spans 1316-1410 (ENNNNNNNNN…INNNINNNNN (95 aa)). In terms of domain architecture, Response regulatory 1 spans 1541–1656 (KILVIDDNPN…QLTVLSQLLP (116 aa)). Asp-1592 is subject to 4-aspartylphosphate. 5 disordered regions span residues 1666–1702 (SNQN…NIDF), 1960–2022 (GNNS…NSSN), 2036–2121 (CKGD…DIIN), 2133–2183 (QQQL…VKSS), and 2218–2256 (NQLN…NNND). Over residues 1676–1696 (SNGGGGGGGGGGGGGGGGGSG) the composition is skewed to gly residues. Residues 1974 to 1985 (TNNNTTTTTTTT) are compositionally biased toward low complexity. Residues 1986–2010 (QPKKSPILTSSNGSDKSEGSTGSNR) are compositionally biased toward polar residues. The segment covering 2054 to 2064 (DSSSSSSSSDS) has biased composition (low complexity). Positions 2065 to 2076 (HGQDDHSYRLED) are enriched in basic and acidic residues. Low complexity-rich tracts occupy residues 2078–2109 (SISS…SGIN) and 2133–2165 (QQQL…LPIP). The segment covering 2169–2183 (INSSGASSGIKVKSS) has biased composition (polar residues). The Response regulatory 2 domain occupies 2262-2383 (NILLVEDNLV…LLISLLKKLV (122 aa)). Residue Asp-2313 is modified to 4-aspartylphosphate.

Post-translationally, activation probably requires transfer of a phosphate group between a histidine in the kinase core (transmitter) domain and an aspartate of the receiver domain.

The protein resides in the membrane. It catalyses the reaction ATP + protein L-histidine = ADP + protein N-phospho-L-histidine.. Its function is as follows. Acts as a receptor histidine kinase for a signal transduction pathway. This protein undergoes an ATP-dependent autophosphorylation at a conserved histidine residue in the kinase core, and a phosphoryl group is then transferred to a conserved aspartate residue in the receiver domain. This is Hybrid signal transduction histidine kinase M (dhkM) from Dictyostelium discoideum (Social amoeba).